The sequence spans 231 residues: MPTKTKKRSVLEAERKKIGLDHAPKEDESVDDNFPKQFKRLLQQKEYHESKKKEIKKGNLKNKKKKDYGKIQRLPGERLSEFSQRVNKAIPVSFKSGPSKIDEFTDKKEKKKIAKRKEKRERDWNEIEENFEDKTWEADTTGQFIQIESRKKRKNSPDPWANLQTKPSFGETVQAPPELPELKIKETKYLENVPKVNNMGQTESMARRQALGKQRLELIEKYRELMKTKRK.

Disordered stretches follow at residues Met-1–Asn-33, Tyr-47–Tyr-68, Ser-93–Glu-132, and Ile-147–Glu-178. Residues Ser-9 to Asp-27 show a composition bias toward basic and acidic residues. Basic residues-rich tracts occupy residues Lys-53–Asp-67 and Glu-109–Lys-119.

This sequence belongs to the UPF0653 family.

The protein localises to the nucleus. It localises to the nucleolus. This chain is UPF0653 protein C607.02c, found in Schizosaccharomyces pombe (strain 972 / ATCC 24843) (Fission yeast).